A 249-amino-acid chain; its full sequence is MLNSLIADFRIIFERDPAARNWLEVLFCYPGLQALLIHRFSHRLYTLGLPFFPRLMSHLARFFTGIEIHPGAQIGQGVFIDHGMGVVIGETAIVGDYSLIYQGVTLGGTGKESGKRHPTLGENVVVGAGAKVLGNIAIGDNVRIGAGSVVLRDVPADFTVVGVPGRMVHPSGERVNPLEHGKLPDSEGKVIRLLLERIELLEQQVATLQQQQSEQAWESDYRSCSETDREPVLCRLGDREIEEFLGGTL.

This sequence belongs to the transferase hexapeptide repeat family.

It localises to the cytoplasm. The enzyme catalyses L-serine + acetyl-CoA = O-acetyl-L-serine + CoA. Its pathway is amino-acid biosynthesis; L-cysteine biosynthesis; L-cysteine from L-serine: step 1/2. The protein is Serine acetyltransferase (cysE) of Synechocystis sp. (strain ATCC 27184 / PCC 6803 / Kazusa).